A 280-amino-acid chain; its full sequence is Apoptosis regulator ced-9 (280 aa).

Positions 33–59 (GTEPTDFGINSDAQDLPSPSRQASTRR) are disordered. Residues 43–59 (SDAQDLPSPSRQASTRR) are compositionally biased toward polar residues. The short motif at 80-99 (IEGFVVDYFTHRIRQNGMEW) is the BH4 element. The BH1 motif lies at 160–179 (QTDQCPMSYGRLIGLISFGG). The short motif at 213-229 (NWKEHNRSWDDFMTLGK) is the BH2 element.

The protein belongs to the Bcl-2 family. Interacts with asymmetric homodimer ced-4; the interaction sequesters ced-4. Interacts with egl-1; the interaction results in ced-4 release. Interacts with dre-1; the interaction inhibits ced-9 activity, either directly or indirectly. Interacts with dct-1. May form a complex composed of ced-9, ced-4 and mac-1. Interacts with dynamin-related protein drp-1 (via residues 280-502); the interaction is enhanced by GTP rather than GDP; the interaction is probably direct and may occur at the mitochondrion. Interaction with drp-1 may be enhanced by interaction of ced-9 with egl-1, but not with ced-4. A ced-9/egl-1 complex may recruit drp-1 to the mitochondrial surface. Interacts with fzo-1; interaction may be suppressed by interaction of ced-9 with egl-1.

It is found in the perikaryon. It localises to the synapse. Its subcellular location is the endomembrane system. The protein resides in the mitochondrion membrane. The protein localises to the cytoplasm. Functionally, plays a major role in programmed cell death (PCD, apoptosis). egl-1 binds to and directly inhibits the activity of ced-9, releasing the cell death activator ced-4 from a ced-9/ced-4 containing protein complex and allowing ced-4 to activate the cell-killing caspase ced-3. During larval development, required for the elimination of transient presynaptic components downstream of egl-1 and upstream of ced-4 and ced-3 apoptotic pathway. Has been shown in one study to be dispensable in mitochondrial dynamics and morphology during early embryonic development. However, another study shows that a egl-1/ced-9 containing complex may promote drp-1-dependent mitochondrial fission. In Caenorhabditis elegans, this protein is Apoptosis regulator ced-9 (ced-9).